The following is a 337-amino-acid chain: Phenylalanine--tRNA ligase alpha subunit (337 aa).

E252 lines the Mg(2+) pocket.

Belongs to the class-II aminoacyl-tRNA synthetase family. Phe-tRNA synthetase alpha subunit type 1 subfamily. In terms of assembly, tetramer of two alpha and two beta subunits. It depends on Mg(2+) as a cofactor.

It is found in the cytoplasm. The enzyme catalyses tRNA(Phe) + L-phenylalanine + ATP = L-phenylalanyl-tRNA(Phe) + AMP + diphosphate + H(+). The sequence is that of Phenylalanine--tRNA ligase alpha subunit from Francisella tularensis subsp. holarctica (strain OSU18).